The chain runs to 357 residues: Alanine racemase (357 aa).

K34 (proton acceptor; specific for D-alanine) is an active-site residue. Position 34 is an N6-(pyridoxal phosphate)lysine (K34). R127 contributes to the substrate binding site. The Proton acceptor; specific for L-alanine role is filled by Y252. M301 is a substrate binding site.

It belongs to the alanine racemase family. Requires pyridoxal 5'-phosphate as cofactor.

It catalyses the reaction L-alanine = D-alanine. It functions in the pathway amino-acid biosynthesis; D-alanine biosynthesis; D-alanine from L-alanine: step 1/1. Catalyzes the interconversion of L-alanine and D-alanine. May also act on other amino acids. The chain is Alanine racemase (alr) from Dichelobacter nodosus (strain VCS1703A).